The sequence spans 764 residues: Irregular chiasm C-roughest protein (764 aa).

An N-terminal signal peptide occupies residues 1-19; sequence MLHTMQLLLLATIVGMVRS. Residues 20–533 lie on the Extracellular side of the membrane; the sequence is SPYTSYQNQR…QAKKSVSLLM (514 aa). 5 Ig-like C2-type domains span residues 21 to 120, 132 to 230, 237 to 343, 346 to 419, and 430 to 530; these read PYTS…PAIR, PEAP…AKIR, PKVK…LDIS, PSFR…AEIS, and PAIG…KSVS. 5 cysteine pairs are disulfide-bonded: cysteine 49–cysteine 107, cysteine 155–cysteine 214, cysteine 281–cysteine 325, cysteine 367–cysteine 408, and cysteine 450–cysteine 508. Asparagine 211, asparagine 313, asparagine 393, asparagine 400, and asparagine 507 each carry an N-linked (GlcNAc...) asparagine glycan. The helical transmembrane segment at 534–556 threads the bilayer; the sequence is TIVGGISVVAFLLVLTILVVVYI. Topologically, residues 557–764 are cytoplasmic; that stretch reads KCKKRTKLPP…SSLLPPPTAV (208 aa). Disordered stretches follow at residues 640–660 and 691–719; these read HQNQLQLQQQQQQSHHQHHTQ and NGLPSLQSTTASVVSSSPNGSCSNQSTTA. Polar residues predominate over residues 692 to 701; that stretch reads GLPSLQSTTA. Positions 702–719 are enriched in low complexity; the sequence is SVVSSSPNGSCSNQSTTA.

Postembryonic expression is strong in the developing optic lobe and in the eye imaginal disk.

Its subcellular location is the membrane. In terms of biological role, required for correct axonal pathway formation in the optic lobe and for programmed cell death in the developing retina. The sequence is that of Irregular chiasm C-roughest protein (rst) from Drosophila melanogaster (Fruit fly).